Consider the following 132-residue polypeptide: D-ribose pyranase (132 aa).

The Proton donor role is filled by H20. Residues D28, H99, and 121–123 (YSN) contribute to the substrate site.

Belongs to the RbsD / FucU family. RbsD subfamily. In terms of assembly, homodecamer.

It localises to the cytoplasm. It carries out the reaction beta-D-ribopyranose = beta-D-ribofuranose. It functions in the pathway carbohydrate metabolism; D-ribose degradation; D-ribose 5-phosphate from beta-D-ribopyranose: step 1/2. Catalyzes the interconversion of beta-pyran and beta-furan forms of D-ribose. In Lactococcus lactis subsp. cremoris (strain MG1363), this protein is D-ribose pyranase.